Consider the following 483-residue polypeptide: Glutamyl-tRNA(Gln) amidotransferase subunit A (483 aa).

Catalysis depends on charge relay system residues lysine 75 and serine 150. Serine 174 functions as the Acyl-ester intermediate in the catalytic mechanism.

This sequence belongs to the amidase family. GatA subfamily. As to quaternary structure, heterotrimer of A, B and C subunits.

It carries out the reaction L-glutamyl-tRNA(Gln) + L-glutamine + ATP + H2O = L-glutaminyl-tRNA(Gln) + L-glutamate + ADP + phosphate + H(+). Allows the formation of correctly charged Gln-tRNA(Gln) through the transamidation of misacylated Glu-tRNA(Gln) in organisms which lack glutaminyl-tRNA synthetase. The reaction takes place in the presence of glutamine and ATP through an activated gamma-phospho-Glu-tRNA(Gln). In Gloeothece citriformis (strain PCC 7424) (Cyanothece sp. (strain PCC 7424)), this protein is Glutamyl-tRNA(Gln) amidotransferase subunit A.